Reading from the N-terminus, the 430-residue chain is Serine--tRNA ligase (430 aa).

Position 237–239 (237–239 (TAE)) interacts with L-serine. 268–270 (RAE) is an ATP binding site. L-serine is bound at residue E291. Residue 355–358 (EISS) coordinates ATP. L-serine is bound at residue S391.

It belongs to the class-II aminoacyl-tRNA synthetase family. Type-1 seryl-tRNA synthetase subfamily. In terms of assembly, homodimer. The tRNA molecule binds across the dimer.

It localises to the cytoplasm. The catalysed reaction is tRNA(Ser) + L-serine + ATP = L-seryl-tRNA(Ser) + AMP + diphosphate + H(+). The enzyme catalyses tRNA(Sec) + L-serine + ATP = L-seryl-tRNA(Sec) + AMP + diphosphate + H(+). It functions in the pathway aminoacyl-tRNA biosynthesis; selenocysteinyl-tRNA(Sec) biosynthesis; L-seryl-tRNA(Sec) from L-serine and tRNA(Sec): step 1/1. Its function is as follows. Catalyzes the attachment of serine to tRNA(Ser). Is also able to aminoacylate tRNA(Sec) with serine, to form the misacylated tRNA L-seryl-tRNA(Sec), which will be further converted into selenocysteinyl-tRNA(Sec). This is Serine--tRNA ligase from Serratia proteamaculans (strain 568).